The chain runs to 412 residues: 2-methylacyl-CoA dehydrogenase, mitochondrial (412 aa).

A mitochondrion-targeting transit peptide spans 1–25 (MHKLFAVRSLSSAIVKSFKSLQNQQ). Residues 154–163 (LAMSEPNAGS) and 187–189 (WCT) contribute to the FAD site. Substrate is bound at residue Ser163. Substrate-binding positions include 209 to 210 (SK), Tyr264, and 271 to 274 (DLER). Catalysis depends on Glu273, which acts as the Proton acceptor. FAD is bound by residues Arg299, Gln310, and 367-371 (QCLGG). Position 394-395 (394-395 (AG)) interacts with substrate. 396–398 (TSE) lines the FAD pocket.

The protein belongs to the acyl-CoA dehydrogenase family. Homotetramer. It depends on FAD as a cofactor. Expressed in flowers.

It is found in the mitochondrion. It catalyses the reaction 2-methylbutanoyl-CoA + oxidized [electron-transfer flavoprotein] + H(+) = (2E)-2-methylbut-2-enoyl-CoA + reduced [electron-transfer flavoprotein]. Its function is as follows. Short/branched-chain acyl-CoA dehydrogenase (SBCAD). Uses 2-methylbutanoyl-CoA as substrate. Minor activity with the straight-chain substrates, butanoyl-CoA, valeryl-CoA, hexanoyl-CoA, and octanoyl-CoA but no activity with isovaleryl-CoA. The protein is 2-methylacyl-CoA dehydrogenase, mitochondrial (2MBCD) of Solanum tuberosum (Potato).